The sequence spans 75 residues: Large ribosomal subunit protein bL31 (75 aa).

Belongs to the bacterial ribosomal protein bL31 family. Type A subfamily. Part of the 50S ribosomal subunit.

Functionally, binds the 23S rRNA. The chain is Large ribosomal subunit protein bL31 from Rhodopseudomonas palustris (strain BisB5).